Reading from the N-terminus, the 101-residue chain is Large ribosomal subunit protein uL23 (101 aa).

It belongs to the universal ribosomal protein uL23 family. Part of the 50S ribosomal subunit. Contacts protein L29, and trigger factor when it is bound to the ribosome.

Functionally, one of the early assembly proteins it binds 23S rRNA. One of the proteins that surrounds the polypeptide exit tunnel on the outside of the ribosome. Forms the main docking site for trigger factor binding to the ribosome. The sequence is that of Large ribosomal subunit protein uL23 from Haemophilus ducreyi (strain 35000HP / ATCC 700724).